The chain runs to 201 residues: Peptidyl-tRNA hydrolase (201 aa).

Tyrosine 14 provides a ligand contact to tRNA. Histidine 19 acts as the Proton acceptor in catalysis. Residues tyrosine 64, asparagine 66, and asparagine 113 each coordinate tRNA. The tract at residues 178-201 is disordered; the sequence is PGPAMNRFNRKPEPPESGGEVAAK.

The protein belongs to the PTH family. As to quaternary structure, monomer.

Its subcellular location is the cytoplasm. The catalysed reaction is an N-acyl-L-alpha-aminoacyl-tRNA + H2O = an N-acyl-L-amino acid + a tRNA + H(+). Its function is as follows. Hydrolyzes ribosome-free peptidyl-tRNAs (with 1 or more amino acids incorporated), which drop off the ribosome during protein synthesis, or as a result of ribosome stalling. In terms of biological role, catalyzes the release of premature peptidyl moieties from peptidyl-tRNA molecules trapped in stalled 50S ribosomal subunits, and thus maintains levels of free tRNAs and 50S ribosomes. In Koribacter versatilis (strain Ellin345), this protein is Peptidyl-tRNA hydrolase.